The sequence spans 146 residues: UPF0260 protein Swoo_2117 (146 aa).

The protein belongs to the UPF0260 family.

This Shewanella woodyi (strain ATCC 51908 / MS32) protein is UPF0260 protein Swoo_2117.